The chain runs to 681 residues: Phosphomethylpyrimidine synthase (681 aa).

The span at Met-1–Ser-13 shows a compositional bias: polar residues. The tract at residues Met-1–Glu-29 is disordered. Residues His-15–Lys-25 are compositionally biased toward basic residues. Substrate contacts are provided by residues Asn-254, Met-283, Tyr-312, His-348, Ser-368–Gly-370, Asp-409–Arg-412, and Glu-448. His-452 contacts Zn(2+). Tyr-475 is a binding site for substrate. Residue His-516 participates in Zn(2+) binding. Residues Cys-596, Cys-599, and Cys-604 each contribute to the [4Fe-4S] cluster site. Residues Phe-658–His-667 are compositionally biased toward basic and acidic residues. The segment at Phe-658 to Thr-681 is disordered.

The protein belongs to the ThiC family. As to quaternary structure, homodimer. [4Fe-4S] cluster serves as cofactor.

It carries out the reaction 5-amino-1-(5-phospho-beta-D-ribosyl)imidazole + S-adenosyl-L-methionine = 4-amino-2-methyl-5-(phosphooxymethyl)pyrimidine + CO + 5'-deoxyadenosine + formate + L-methionine + 3 H(+). It participates in cofactor biosynthesis; thiamine diphosphate biosynthesis. In terms of biological role, catalyzes the synthesis of the hydroxymethylpyrimidine phosphate (HMP-P) moiety of thiamine from aminoimidazole ribotide (AIR) in a radical S-adenosyl-L-methionine (SAM)-dependent reaction. The chain is Phosphomethylpyrimidine synthase from Yersinia pseudotuberculosis serotype I (strain IP32953).